The primary structure comprises 275 residues: Release factor glutamine methyltransferase (275 aa).

Residues Gly114 to Gly118, Asp137, Trp165, and Asn180 contribute to the S-adenosyl-L-methionine site. Position 180–183 (Asn180–Tyr183) interacts with substrate.

It belongs to the protein N5-glutamine methyltransferase family. PrmC subfamily.

The catalysed reaction is L-glutaminyl-[peptide chain release factor] + S-adenosyl-L-methionine = N(5)-methyl-L-glutaminyl-[peptide chain release factor] + S-adenosyl-L-homocysteine + H(+). In terms of biological role, methylates the class 1 translation termination release factors RF1/PrfA and RF2/PrfB on the glutamine residue of the universally conserved GGQ motif. This chain is Release factor glutamine methyltransferase, found in Xylella fastidiosa (strain Temecula1 / ATCC 700964).